The chain runs to 227 residues: Dephospho-CoA kinase (227 aa).

One can recognise a DPCK domain in the interval 31–227; sequence KIGLTGGIGS…EKLFQFINCL (197 aa). 39-44 serves as a coordination point for ATP; it reads GSGKST.

The protein belongs to the CoaE family.

It is found in the cytoplasm. It catalyses the reaction 3'-dephospho-CoA + ATP = ADP + CoA + H(+). The protein operates within cofactor biosynthesis; coenzyme A biosynthesis; CoA from (R)-pantothenate: step 5/5. In terms of biological role, catalyzes the phosphorylation of the 3'-hydroxyl group of dephosphocoenzyme A to form coenzyme A. The sequence is that of Dephospho-CoA kinase from Clostridium tetani (strain Massachusetts / E88).